The primary structure comprises 75 residues: Insecticidal toxin OcyC10 (75 aa).

The N-terminal stretch at Met1–Ala19 is a signal peptide. 2 disulfide bridges follow: Cys50–Cys62 and Cys56–Cys68.

Expressed by the venom gland.

It localises to the secreted. Its function is as follows. Insecticidal toxin. This Opisthacanthus cayaporum (South American scorpion) protein is Insecticidal toxin OcyC10.